A 408-amino-acid chain; its full sequence is LysM domain-containing protein ARB_01488 (408 aa).

Positions 1-17 (MVKYALLPLVAVSLVQA) are cleaved as a signal peptide. The LysM 1 domain occupies 42–91 (SWINVVDASGKLTCDAFLDTINVAKRQFIFWNPQLNSDCSNIQSKASYCA). Residues 98 to 178 (SKQTRGQMDP…HGPKEAPPPD (81 aa)) form a disordered region. A compositionally biased stretch (pro residues) spans 106-116 (DPPPKTKPLPP). 2 consecutive LysM domains span residues 270 to 320 (QYHT…RVCV) and 360 to 406 (SFEL…YACV).

Its subcellular location is the secreted. Might have a role in sequestration of chitin oligosaccharides (breakdown products of fungal cell walls that are released during invasion and act as triggers of host immunity) to dampen host defense. This is LysM domain-containing protein ARB_01488 from Arthroderma benhamiae (strain ATCC MYA-4681 / CBS 112371) (Trichophyton mentagrophytes).